A 291-amino-acid polypeptide reads, in one-letter code: 5'-3' exonuclease (291 aa).

In terms of domain architecture, 5'-3' exonuclease spans threonine 176–lysine 269.

In terms of biological role, 5'-3' exonuclease acting preferentially on double-stranded DNA. In Mycoplasma pneumoniae (strain ATCC 29342 / M129 / Subtype 1) (Mycoplasmoides pneumoniae), this protein is 5'-3' exonuclease (polA).